We begin with the raw amino-acid sequence, 383 residues long: tRNA-specific 2-thiouridylase MnmA (383 aa).

ATP-binding positions include 29-36 and Met-55; that span reads GMSGGVDS. An interaction with target base in tRNA region spans residues 115-117; sequence NPD. Cys-120 serves as the catalytic Nucleophile. Residues Cys-120 and Cys-217 are joined by a disulfide bond. Gly-145 is an ATP binding site. The segment at 167 to 169 is interaction with tRNA; that stretch reads KDQ. Cys-217 acts as the Cysteine persulfide intermediate in catalysis. An interaction with tRNA region spans residues 329 to 330; that stretch reads RY.

The protein belongs to the MnmA/TRMU family.

The protein localises to the cytoplasm. The catalysed reaction is S-sulfanyl-L-cysteinyl-[protein] + uridine(34) in tRNA + AH2 + ATP = 2-thiouridine(34) in tRNA + L-cysteinyl-[protein] + A + AMP + diphosphate + H(+). Catalyzes the 2-thiolation of uridine at the wobble position (U34) of tRNA, leading to the formation of s(2)U34. The protein is tRNA-specific 2-thiouridylase MnmA of Histophilus somni (strain 2336) (Haemophilus somnus).